The primary structure comprises 617 residues: DNA double-strand break repair protein Mre11 (617 aa).

Mn(2+) contacts are provided by Asp-12, His-14, Asp-53, and Asn-88. The Proton donor role is filled by His-89. Residues His-158, Asp-189, and His-191 each contribute to the Mn(2+) site. A compositionally biased stretch (low complexity) spans 395-432 (SPVDPSSSVSSIESSGSVSPIDSVSTVSPSSPSSSAII). Disordered stretches follow at residues 395–437 (SPVD…EPEE) and 513–617 (VEDE…GDYL). The span at 529-547 (APQSSSPVSFSDNSQTGFS) shows a compositional bias: polar residues. Positions 549–559 (ISPPESIPSPE) are enriched in low complexity. The segment covering 560 to 583 (ILKENSEADADEKPVDGKLSEEKP) has biased composition (basic and acidic residues).

This sequence belongs to the MRE11/RAD32 family. As to quaternary structure, homodimer. Forms a heterotetramer composed of two Mre11 subunits and two Rad50 subunits. Mn(2+) serves as cofactor.

With respect to regulation, nuclease activity is regulated by Rad50. Part of the Rad50/Mre11 complex, which is involved in the early steps of DNA double-strand break (DSB) repair. The complex may facilitate opening of the processed DNA ends to aid in the recruitment of HerA and NurA. Mre11 binds to DSB ends and has both double-stranded 3'-5' exonuclease activity and single-stranded endonuclease activity. The polypeptide is DNA double-strand break repair protein Mre11 (Methanosarcina mazei (strain ATCC BAA-159 / DSM 3647 / Goe1 / Go1 / JCM 11833 / OCM 88) (Methanosarcina frisia)).